Here is a 131-residue protein sequence, read N- to C-terminus: Small ribosomal subunit protein uS9 (131 aa).

Belongs to the universal ribosomal protein uS9 family.

This Actinobacillus succinogenes (strain ATCC 55618 / DSM 22257 / CCUG 43843 / 130Z) protein is Small ribosomal subunit protein uS9.